Consider the following 167-residue polypeptide: Small ribosomal subunit protein uS3m (167 aa).

Residues 1-35 constitute a mitochondrion transit peptide; sequence MAWSASVRGLGQRVLACSRELPGAWRTLHTSAVCA.

It belongs to the universal ribosomal protein uS3 family. Component of the mitochondrial ribosome small subunit (28S) which comprises a 12S rRNA and about 30 distinct proteins.

It localises to the mitochondrion. This is Small ribosomal subunit protein uS3m (Mrps24) from Mus musculus (Mouse).